Reading from the N-terminus, the 140-residue chain is FlaA locus uncharacterized protein YlxG (140 aa).

The interval 1–21 (MTSISSEYKLPEKTNTVSTNN) is disordered.

This sequence belongs to the FlgD family.

The protein is FlaA locus uncharacterized protein YlxG (ylxG) of Bacillus subtilis (strain 168).